The chain runs to 352 residues: S-adenosylmethionine:tRNA ribosyltransferase-isomerase (352 aa).

Belongs to the QueA family. In terms of assembly, monomer.

The protein resides in the cytoplasm. The catalysed reaction is 7-aminomethyl-7-carbaguanosine(34) in tRNA + S-adenosyl-L-methionine = epoxyqueuosine(34) in tRNA + adenine + L-methionine + 2 H(+). It functions in the pathway tRNA modification; tRNA-queuosine biosynthesis. Functionally, transfers and isomerizes the ribose moiety from AdoMet to the 7-aminomethyl group of 7-deazaguanine (preQ1-tRNA) to give epoxyqueuosine (oQ-tRNA). This chain is S-adenosylmethionine:tRNA ribosyltransferase-isomerase, found in Bacteroides fragilis (strain ATCC 25285 / DSM 2151 / CCUG 4856 / JCM 11019 / LMG 10263 / NCTC 9343 / Onslow / VPI 2553 / EN-2).